A 357-amino-acid polypeptide reads, in one-letter code: Protein pelota homolog (357 aa).

Belongs to the eukaryotic release factor 1 family. Pelota subfamily. In terms of assembly, monomer. A divalent metal cation serves as cofactor.

It localises to the cytoplasm. Its function is as follows. May function in recognizing stalled ribosomes, interact with stem-loop structures in stalled mRNA molecules, and effect endonucleolytic cleavage of the mRNA. May play a role in the release non-functional ribosomes and degradation of damaged mRNAs. Has endoribonuclease activity. The polypeptide is Protein pelota homolog (Thermococcus gammatolerans (strain DSM 15229 / JCM 11827 / EJ3)).